We begin with the raw amino-acid sequence, 380 residues long: Queuine tRNA-ribosyltransferase (380 aa).

The Proton acceptor role is filled by Asp-95. Substrate contacts are provided by residues 95-99, Asp-149, Gln-192, and Gly-219; that span reads DSGGF. Residues 250–256 form an RNA binding region; that stretch reads GVGSPDA. Asp-269 functions as the Nucleophile in the catalytic mechanism. The tract at residues 274–278 is RNA binding; important for wobble base 34 recognition; the sequence is TRIAR. Residues Cys-307, Cys-309, Cys-312, and His-338 each coordinate Zn(2+).

The protein belongs to the queuine tRNA-ribosyltransferase family. Homodimer. Within each dimer, one monomer is responsible for RNA recognition and catalysis, while the other monomer binds to the replacement base PreQ1. The cofactor is Zn(2+).

The enzyme catalyses 7-aminomethyl-7-carbaguanine + guanosine(34) in tRNA = 7-aminomethyl-7-carbaguanosine(34) in tRNA + guanine. It participates in tRNA modification; tRNA-queuosine biosynthesis. Functionally, catalyzes the base-exchange of a guanine (G) residue with the queuine precursor 7-aminomethyl-7-deazaguanine (PreQ1) at position 34 (anticodon wobble position) in tRNAs with GU(N) anticodons (tRNA-Asp, -Asn, -His and -Tyr). Catalysis occurs through a double-displacement mechanism. The nucleophile active site attacks the C1' of nucleotide 34 to detach the guanine base from the RNA, forming a covalent enzyme-RNA intermediate. The proton acceptor active site deprotonates the incoming PreQ1, allowing a nucleophilic attack on the C1' of the ribose to form the product. After dissociation, two additional enzymatic reactions on the tRNA convert PreQ1 to queuine (Q), resulting in the hypermodified nucleoside queuosine (7-(((4,5-cis-dihydroxy-2-cyclopenten-1-yl)amino)methyl)-7-deazaguanosine). In Latilactobacillus sakei subsp. sakei (strain 23K) (Lactobacillus sakei subsp. sakei), this protein is Queuine tRNA-ribosyltransferase.